A 760-amino-acid chain; its full sequence is Endoplasmin homolog (760 aa).

A signal peptide spans 1–23; sequence MRFLLVGFVALLAVSAFIPNVYA. Residues N95, D137, N150, and F187 each coordinate ATP. N-linked (GlcNAc...) asparagine glycosylation is present at N95. N-linked (GlcNAc...) asparagine glycosylation is present at N423. The interval 727–760 is disordered; it reads SQDAQVETEQHIEEAEPEPEAAEETTIEEEHSEL. Residues 741–760 are compositionally biased toward acidic residues; that stretch reads AEPEPEAAEETTIEEEHSEL. The short motif at 757–760 is the Prevents secretion from ER element; sequence HSEL.

It belongs to the heat shock protein 90 family.

It localises to the endoplasmic reticulum lumen. Molecular chaperone that functions in the processing and transport of secreted proteins. The chain is Endoplasmin homolog from Caenorhabditis elegans.